The following is a 287-amino-acid chain: Large ribosomal subunit protein uL2 (287 aa).

The disordered stretch occupies residues 221–287; that stretch reads RGSVMNPCDH…SKRSRGGRDS (67 aa). The span at 271 to 287 shows a compositional bias: basic residues; the sequence is LRKRRKTSKRSRGGRDS.

It belongs to the universal ribosomal protein uL2 family. Part of the 50S ribosomal subunit. Forms a bridge to the 30S subunit in the 70S ribosome.

In terms of biological role, one of the primary rRNA binding proteins. Required for association of the 30S and 50S subunits to form the 70S ribosome, for tRNA binding and peptide bond formation. It has been suggested to have peptidyltransferase activity; this is somewhat controversial. Makes several contacts with the 16S rRNA in the 70S ribosome. In Synechococcus sp. (strain CC9902), this protein is Large ribosomal subunit protein uL2.